The following is a 206-amino-acid chain: Peptidyl-tRNA hydrolase (206 aa).

Tyr19 provides a ligand contact to tRNA. Catalysis depends on His24, which acts as the Proton acceptor. TRNA contacts are provided by Tyr70, Asn72, and Asn118.

Belongs to the PTH family. As to quaternary structure, monomer.

It localises to the cytoplasm. The catalysed reaction is an N-acyl-L-alpha-aminoacyl-tRNA + H2O = an N-acyl-L-amino acid + a tRNA + H(+). Hydrolyzes ribosome-free peptidyl-tRNAs (with 1 or more amino acids incorporated), which drop off the ribosome during protein synthesis, or as a result of ribosome stalling. Functionally, catalyzes the release of premature peptidyl moieties from peptidyl-tRNA molecules trapped in stalled 50S ribosomal subunits, and thus maintains levels of free tRNAs and 50S ribosomes. The polypeptide is Peptidyl-tRNA hydrolase (Prochlorococcus marinus (strain MIT 9313)).